Reading from the N-terminus, the 131-residue chain is Small ribosomal subunit protein uS11 (131 aa).

The protein belongs to the universal ribosomal protein uS11 family. In terms of assembly, part of the 30S ribosomal subunit.

Its function is as follows. Located on the platform of the 30S subunit. This Haloquadratum walsbyi (strain DSM 16790 / HBSQ001) protein is Small ribosomal subunit protein uS11.